The primary structure comprises 546 residues: Mitochondrial distribution and morphology protein 34 (546 aa).

Residues 1-195 (MAFNFNWSPL…LPAIIHRLSL (195 aa)) enclose the SMP-LTD domain. Disordered stretches follow at residues 208-230 (EVKADEEAGPGQDPLLSPPQDPV), 299-319 (SHGGLISPASPPLSRTHSHVA), 344-382 (TMGAGRHPRTRPSRKHKRRVVDLRKPQKLDDTSSTCTDS), 395-416 (SSSARVGEKPDDPITPPVSPDA), and 517-546 (RRIQEGKGPGSVGSNYCGRRDPSPPPAYGQ). Positions 349–362 (RHPRTRPSRKHKRR) are enriched in basic residues. Positions 363–374 (VVDLRKPQKLDD) are enriched in basic and acidic residues.

Belongs to the MDM34 family. In terms of assembly, component of the ER-mitochondria encounter structure (ERMES) or MDM complex, composed of MMM1, MDM10, MDM12 and MDM34.

The protein resides in the mitochondrion outer membrane. In terms of biological role, component of the ERMES/MDM complex, which serves as a molecular tether to connect the endoplasmic reticulum (ER) and mitochondria. Components of this complex are involved in the control of mitochondrial shape and protein biogenesis, and function in nonvesicular lipid trafficking between the ER and mitochondria. MDM34 is required for the interaction of the ER-resident membrane protein MMM1 and the outer mitochondrial membrane-resident beta-barrel protein MDM10. The chain is Mitochondrial distribution and morphology protein 34 from Arthroderma otae (strain ATCC MYA-4605 / CBS 113480) (Microsporum canis).